The following is a 100-amino-acid chain: Small ribosomal subunit protein bS20 (100 aa).

Residues 1–18 are compositionally biased toward basic and acidic residues; it reads MPNKKSAEKRVRQSEQRR. Positions 1–26 are disordered; the sequence is MPNKKSAEKRVRQSEQRRQKNRGYQK.

This sequence belongs to the bacterial ribosomal protein bS20 family.

Functionally, binds directly to 16S ribosomal RNA. The protein is Small ribosomal subunit protein bS20 of Petrotoga mobilis (strain DSM 10674 / SJ95).